Here is a 138-residue protein sequence, read N- to C-terminus: Small ribosomal subunit protein uS11c (138 aa).

The segment at 1–22 is disordered; it reads MTKPIPRIGSRRNGRIGSRKNA. Positions 9–22 are enriched in basic residues; the sequence is GSRRNGRIGSRKNA.

The protein belongs to the universal ribosomal protein uS11 family. Part of the 30S ribosomal subunit.

It localises to the plastid. The protein localises to the chloroplast. The polypeptide is Small ribosomal subunit protein uS11c (Dioscorea elephantipes (Elephant's foot yam)).